The chain runs to 59 residues: Large ribosomal subunit protein uL30 (59 aa).

Belongs to the universal ribosomal protein uL30 family. Part of the 50S ribosomal subunit.

This Listeria welshimeri serovar 6b (strain ATCC 35897 / DSM 20650 / CCUG 15529 / CIP 8149 / NCTC 11857 / SLCC 5334 / V8) protein is Large ribosomal subunit protein uL30.